The following is a 469-amino-acid chain: MGSFGMDWNQKSSVLWDWENMPPIGNSANENPKNVMLAESKLAGVGVDIGHESGHSSGGTFSSSSEIGYGSSKSSISASIDSPSKVGNTIELNFASAEEHDKNMDKGKSKVDDTGTSRSPVVAANRVEPLIGLKLGKRTYFEDVCGGQNVKSSPSGVSVATPSPGLAKKVKVAQQNTQNPHCQVEGCNVDLSSAKPYHRKHRVCEPHSKTLKVIVAGLERRFCQQCSRFHGLAEFDQKKRSCRRRLHDHNARRRKPQPEAISLSSSRLSTLLYGDARQQASFLFGQAPYGQMGSCASSWDNPVPGGFKFTATKAPWSRPTIAAGVDGTHVSNQQASGNVLPHGAHHSFDGLMAFKETNAKVLNQGMEASAVASGSARGPDFEHALSLLSIDSVGAANLQPGSQIHPGVTAIAGTSNPVMMPSPAIWQGGLSLDQQAQFQAFDRLGNDDDEDHLQLPKPSYDNSHYDQMN.

Residues 96-118 (SAEEHDKNMDKGKSKVDDTGTSR) are disordered. The span at 97–115 (AEEHDKNMDKGKSKVDDTG) shows a compositional bias: basic and acidic residues. The SBP-type zinc finger occupies 179–256 (NPHCQVEGCN…HDHNARRRKP (78 aa)). Zn(2+) is bound by residues Cys-182, Cys-187, Cys-204, His-207, Cys-223, Cys-226, His-230, and Cys-242. The Bipartite nuclear localization signal signature appears at 239–255 (KRSCRRRLHDHNARRRK). The segment at 446 to 469 (NDDDEDHLQLPKPSYDNSHYDQMN) is disordered. Residues 460-469 (YDNSHYDQMN) are compositionally biased toward polar residues.

In terms of tissue distribution, ubiquitous.

Its subcellular location is the nucleus. Functionally, trans-acting factor that binds specifically to the consensus nucleotide sequence 5'-TNCGTACAA-3'. May be involved in panicle development. In Oryza sativa subsp. indica (Rice), this protein is Squamosa promoter-binding-like protein 3 (SPL3).